The primary structure comprises 141 residues: MPNQNLIALGFDFGMKRIGVAVGQTVTHSANAIAILKAQDGVPDWEKIKMLIETWHANVLVVGIPYNMDGSEQTLTFAARKFARKLQMRFGLPVSMVDERLTTIEAKRQWYEQGLTKRPQHLDNYAAKLILEQWLQEQKNE.

This sequence belongs to the YqgF nuclease family.

It is found in the cytoplasm. Could be a nuclease involved in processing of the 5'-end of pre-16S rRNA. The protein is Putative pre-16S rRNA nuclease of Coxiella burnetii (strain RSA 331 / Henzerling II).